A 100-amino-acid polypeptide reads, in one-letter code: Protein MEN-8 (100 aa).

Positions 1-33 (MANNMKSATFCKATWAIFLVALAILVQLKGSEA) are cleaved as a signal peptide. 4 cysteine pairs are disulfide-bonded: C38/C76, C48/C65, C66/C91, and C78/C98.

It belongs to the A9/FIL1 family.

The protein resides in the secreted. In Silene latifolia (White campion), this protein is Protein MEN-8 (MEN-8).